Consider the following 581-residue polypeptide: Pyridine nucleotide-disulfide oxidoreductase domain-containing protein 2 (581 aa).

Residue 38–71 coordinates FAD; the sequence is VVIGAGHNGLVAAAYLQRLGVNTAVFERRHVIGG.

This sequence belongs to the carotenoid/retinoid oxidoreductase family. Interacts with COX5B; this interaction may contribute to localize PYROXD2 to the inner face of the inner mitochondrial membrane.

It is found in the mitochondrion matrix. Probable oxidoreductase that may play a role as regulator of mitochondrial function. The sequence is that of Pyridine nucleotide-disulfide oxidoreductase domain-containing protein 2 from Mus musculus (Mouse).